Here is a 109-residue protein sequence, read N- to C-terminus: MEKKIKNFSSSLYMRRKARKTTAMTHSTISHVTNVKKAMIFFLLSFSHFSSGYSACKKKRRGSGLRYFGNKLWRPTPRSGQSGQSRPKTGPHGSQRVVFLELKKAQRWA.

Residues 67-96 (YFGNKLWRPTPRSGQSGQSRPKTGPHGSQR) are disordered. The span at 78-87 (RSGQSGQSRP) shows a compositional bias: polar residues.

This is an uncharacterized protein from Saccharomyces cerevisiae (strain ATCC 204508 / S288c) (Baker's yeast).